The sequence spans 100 residues: uncharacterized protein (100 aa).

An Isoglutamyl lysine isopeptide (Lys-Gln) (interchain with Q-Cter in protein Pup) cross-link involves residue K98.

This is an uncharacterized protein from Mycobacterium tuberculosis (strain CDC 1551 / Oshkosh).